The primary structure comprises 89 residues: Serine-rich and transmembrane domain-containing 2 (89 aa).

N11 is a glycosylation site (N-linked (GlcNAc...) asparagine). The chain crosses the membrane as a helical span at residues 38–58 (YVGLFLSLLAILLILLFTMLL).

Its subcellular location is the membrane. This is Serine-rich and transmembrane domain-containing 2 from Mus musculus (Mouse).